The sequence spans 172 residues: MDLVVGRVVKAHGVTGELAVDVRTDDPEGRFVAGAVLRGRPARGGAEREFVIESVRSHGDRMLIRLQGVGDRDAADALRGTLFLVDSAELPPIEDPDEFYDHQLEGMAVSTTGGQPVGTVAEVLHTAAGELLAVRDPDGAEVLVPFVSAIVVSVSLADNAIEIDPPEGLLDL.

A PRC barrel domain is found at 96 to 169 (PDEFYDHQLE…AIEIDPPEGL (74 aa)).

It belongs to the RimM family. In terms of assembly, binds ribosomal protein uS19.

The protein resides in the cytoplasm. In terms of biological role, an accessory protein needed during the final step in the assembly of 30S ribosomal subunit, possibly for assembly of the head region. Essential for efficient processing of 16S rRNA. May be needed both before and after RbfA during the maturation of 16S rRNA. It has affinity for free ribosomal 30S subunits but not for 70S ribosomes. In Mycolicibacterium vanbaalenii (strain DSM 7251 / JCM 13017 / BCRC 16820 / KCTC 9966 / NRRL B-24157 / PYR-1) (Mycobacterium vanbaalenii), this protein is Ribosome maturation factor RimM.